We begin with the raw amino-acid sequence, 393 residues long: MTRVVLAAAYRTPIGVFGGAFKDVPAYDLGATLIEHIIKETGLNPSEINEVIIGNVLQAGQGQNPARIAAMKGGLPETVPAFTVNKVCGSGLKSIQLAYQSIVTGENDIVLAGGMENMSQSPMLVNNSRFGFKMGHQSMVDSMVYDGLTDVFNQYHMGITAENLVEQYGISREEQDTFAVNSQQKAVRAQQNGEFDSEIVPVSIPQRKGEPIVVTKDEGVRENVSVEKLSRLRPAFKKDGTVTAGNASGINDGAAMMLVMSEDKAKELNIEPLAVLDGFGSHGVDPAIMGIAPVDAVEKALKRSKKELSDIDVFELNEAFAAQSLAVDRELKLPPEKVNVKGGAIALGHPIGASGARVLVTLLHQLNDEVETGLTSLCIGGGQAIAAVVSKYK.

Cys88 functions as the Acyl-thioester intermediate in the catalytic mechanism. Active-site proton acceptor residues include His349 and Cys378.

It belongs to the thiolase-like superfamily. Thiolase family.

Its subcellular location is the cytoplasm. It catalyses the reaction 2 acetyl-CoA = acetoacetyl-CoA + CoA. The polypeptide is Probable acetyl-CoA acyltransferase (Staphylococcus aureus (strain MRSA252)).